The chain runs to 362 residues: Glutaminase-asparaginase (362 aa).

A signal peptide spans 1 to 25 (MKPLLHAFAPGVMALMLLLPQAAQA). In terms of domain architecture, Asparaginase/glutaminase spans 35 to 362 (SNVVILATGG…KELQRIFWEY (328 aa)). Thr45 functions as the Acyl-ester intermediate in the catalytic mechanism. Residues Ser92 and 125 to 126 (TD) each bind substrate.

The protein belongs to the asparaginase 1 family. As to quaternary structure, homotetramer.

The protein localises to the periplasm. The catalysed reaction is L-glutamine + H2O = L-glutamate + NH4(+). It catalyses the reaction L-asparagine + H2O = L-aspartate + NH4(+). The chain is Glutaminase-asparaginase (ansB) from Pseudomonas aeruginosa (strain ATCC 15692 / DSM 22644 / CIP 104116 / JCM 14847 / LMG 12228 / 1C / PRS 101 / PAO1).